We begin with the raw amino-acid sequence, 210 residues long: Oxygen-insensitive NADPH nitroreductase (210 aa).

150–155 lines the NADP(+) pocket; that stretch reads GVSLMG.

The protein belongs to the nitroreductase family.

Reduction of a variety of nitroaromatic compounds using NADPH as source of reducing equivalents; two electrons are transferred. The sequence is that of Oxygen-insensitive NADPH nitroreductase (rdxA) from Helicobacter pylori (strain J99 / ATCC 700824) (Campylobacter pylori J99).